The chain runs to 476 residues: Amidophosphoribosyltransferase (476 aa).

A propeptide spanning residues 1 to 11 (MLAEIKGLNEE) is cleaved from the precursor. C12 functions as the Nucleophile in the catalytic mechanism. The Glutamine amidotransferase type-2 domain maps to 12 to 231 (CGVFGIWGHE…PGEMLIINDE (220 aa)). C247 contacts [4Fe-4S] cluster. 3 residues coordinate Mg(2+): S294, D356, and D357. Residues C393, C448, and C451 each coordinate [4Fe-4S] cluster.

The protein in the C-terminal section; belongs to the purine/pyrimidine phosphoribosyltransferase family. In terms of assembly, homotetramer. The cofactor is Mg(2+). [4Fe-4S] cluster serves as cofactor.

The catalysed reaction is 5-phospho-beta-D-ribosylamine + L-glutamate + diphosphate = 5-phospho-alpha-D-ribose 1-diphosphate + L-glutamine + H2O. It functions in the pathway purine metabolism; IMP biosynthesis via de novo pathway; N(1)-(5-phospho-D-ribosyl)glycinamide from 5-phospho-alpha-D-ribose 1-diphosphate: step 1/2. Its activity is regulated as follows. Allosterically regulated; subject to end product regulation by purine nucleotides. In terms of biological role, catalyzes the formation of phosphoribosylamine from phosphoribosylpyrophosphate (PRPP) and glutamine. This is Amidophosphoribosyltransferase from Bacillus subtilis (strain 168).